The chain runs to 332 residues: Phenol 2-monooxygenase, oxygenase component MhpL (332 aa).

The protein belongs to the TmoE/XamoE family.

It carries out the reaction phenol + NADH + O2 + H(+) = catechol + NAD(+) + H2O. It participates in aromatic compound metabolism; phenol degradation. In terms of biological role, part of a multicomponent enzyme which catalyzes the degradation of phenol and some of its methylated derivatives. In Acinetobacter pittii (strain PHEA-2), this protein is Phenol 2-monooxygenase, oxygenase component MhpL (mphL).